Reading from the N-terminus, the 493-residue chain is Argininosuccinate lyase (493 aa).

This sequence belongs to the lyase 1 family. Argininosuccinate lyase subfamily.

The protein resides in the cytoplasm. It catalyses the reaction 2-(N(omega)-L-arginino)succinate = fumarate + L-arginine. The protein operates within amino-acid biosynthesis; L-arginine biosynthesis; L-arginine from L-ornithine and carbamoyl phosphate: step 3/3. This is Argininosuccinate lyase from Methanospirillum hungatei JF-1 (strain ATCC 27890 / DSM 864 / NBRC 100397 / JF-1).